Reading from the N-terminus, the 544-residue chain is Chaperonin GroEL (544 aa).

ATP contacts are provided by residues 29 to 32 (TLGP), Lys-50, 86 to 90 (DGTTT), Gly-413, 479 to 481 (DAA), and Asp-495.

Belongs to the chaperonin (HSP60) family. As to quaternary structure, forms a cylinder of 14 subunits composed of two heptameric rings stacked back-to-back. Interacts with the co-chaperonin GroES.

The protein localises to the cytoplasm. The catalysed reaction is ATP + H2O + a folded polypeptide = ADP + phosphate + an unfolded polypeptide.. Its function is as follows. Together with its co-chaperonin GroES, plays an essential role in assisting protein folding. The GroEL-GroES system forms a nano-cage that allows encapsulation of the non-native substrate proteins and provides a physical environment optimized to promote and accelerate protein folding. This chain is Chaperonin GroEL, found in Borrelia turicatae (strain 91E135).